Consider the following 574-residue polypeptide: MALLWLLSVFLLVPGTQGAKDGDMRLVNGASASEGRVEIFYRGRWGTVCDNLWNLLDAHVVCRALGYENATQALSRAAFGPGKGPIMLDEVECTGNESSLANCSSLGWMVSHCGHEKDAGVVCSNDSRGIHILDLSGELPDALGQIFDSQQDCDLFIQVTGQGHGDLSLCAHTLILRTNPEAQALWQVVGSSVIMRVDAECMPVVRDFLRYFYSRRIEVSMSSVKCLHKLASAYGATELQGYCGRLFVTLLPQDPTFHTPLELYEYAQATGDSVLEDLCVQFLAWNFEPLTQAEAWLSVPNALIQALLPKSELAVSSELDLLKAVDQWSTATGASHGDVERLVEQIRFPMMLPQELFELQFNLSLYQGHQALFQRKTMEALEFHTVPLKVLAKYRSLNLTEDVYKPRLYTSSTWSSLLMAGAWSTQSYKYRQFYTYNYGSQSRYSSYQNFQTPQHPSFLFKDKLISWSATYLPTIQSCWNYGFSCTSDELPVLGLTTSSYSDPTIGYENKALILCGGYSVVDVTTFIGSKAPIPGTQETNSSKTPSLFPCASGAFSSFRVVIRPFYLTNSTDTE.

The signal sequence occupies residues 1-18 (MALLWLLSVFLLVPGTQG). The SRCR domain occupies 24–124 (MRLVNGASAS…HEKDAGVVCS (101 aa)). Intrachain disulfides connect cysteine 49/cysteine 113, cysteine 62/cysteine 123, and cysteine 93/cysteine 103. 4 N-linked (GlcNAc...) asparagine glycosylation sites follow: asparagine 69, asparagine 96, asparagine 102, and asparagine 125. The region spanning 153 to 221 (CDLFIQVTGQ…FYSRRIEVSM (69 aa)) is the BTB domain. The 101-residue stretch at 260–360 (PLELYEYAQA…MLPQELFELQ (101 aa)) folds into the BACK domain. N-linked (GlcNAc...) asparagine glycosylation is found at asparagine 362, asparagine 398, asparagine 540, and asparagine 569.

In terms of assembly, homodimers and homomultimers. The multimers form ring-like structures with a diameter of 30-40 nm. Binds LGALS1 and LGALS3. Binds ITGB1, COL4A1, COL5A1, COL6A1, FN1 and NID. The unglycosylated form interacts with PDE4DIP; this interaction, which is PDE4DIP isoform-specific, may connect a pericentrosomal complex to the gamma-tubulin ring complex (gamma-TuRC) to promote microtubule assembly and acetylation. In terms of tissue distribution, detected in thyroid (at protein level).

It is found in the secreted. It localises to the extracellular space. Its subcellular location is the extracellular matrix. Its function is as follows. Promotes integrin-mediated cell adhesion. May stimulate host defense against viruses and tumor cells. The protein is Galectin-3-binding protein (Lgals3bp) of Rattus norvegicus (Rat).